A 342-amino-acid polypeptide reads, in one-letter code: Photosystem II D2 protein (342 aa).

Over glutamate 1–proline 29 the chain is Cytoplasmic. A helical membrane pass occupies residues cysteine 30–threonine 50. Residues histidine 51–isoleucine 113 are Lumenal-facing. Histidine 107 serves as a coordination point for chlorophyll a. A helical transmembrane segment spans residues glycine 114 to proline 130. 2 residues coordinate pheophytin a: glutamine 119 and asparagine 132. The Cytoplasmic segment spans residues tyrosine 131 to alanine 141. Residues valine 142–serine 155 form a helical membrane-spanning segment. Topologically, residues serine 156 to glycine 196 are lumenal. Residue histidine 187 participates in chlorophyll a binding. Residues glycine 197–glutamate 217 form a helical membrane-spanning segment. A plastoquinone is bound by residues histidine 204 and phenylalanine 251. Residue histidine 204 participates in Fe cation binding. Topologically, residues glycine 218–threonine 267 are cytoplasmic. Residue histidine 258 coordinates Fe cation. A helical membrane pass occupies residues glycine 268–arginine 284. The Lumenal segment spans residues serine 285–leucine 342.

Belongs to the reaction center PufL/M/PsbA/D family. As to quaternary structure, PSII is composed of 1 copy each of membrane proteins PsbA, PsbB, PsbC, PsbD, PsbE, PsbF, PsbH, PsbI, PsbJ, PsbK, PsbL, PsbM, PsbT, PsbX, PsbY, PsbZ, Psb30/Ycf12, peripheral proteins PsbO, CyanoQ (PsbQ), PsbU, PsbV and a large number of cofactors. It forms dimeric complexes. It depends on The D1/D2 heterodimer binds P680, chlorophylls that are the primary electron donor of PSII, and subsequent electron acceptors. It shares a non-heme iron and each subunit binds pheophytin, quinone, additional chlorophylls, carotenoids and lipids. There is also a Cl(-1) ion associated with D1 and D2, which is required for oxygen evolution. The PSII complex binds additional chlorophylls, carotenoids and specific lipids. as a cofactor.

It is found in the cellular thylakoid membrane. The enzyme catalyses 2 a plastoquinone + 4 hnu + 2 H2O = 2 a plastoquinol + O2. In terms of biological role, photosystem II (PSII) is a light-driven water:plastoquinone oxidoreductase that uses light energy to abstract electrons from H(2)O, generating O(2) and a proton gradient subsequently used for ATP formation. It consists of a core antenna complex that captures photons, and an electron transfer chain that converts photonic excitation into a charge separation. The D1/D2 (PsbA/PsbD) reaction center heterodimer binds P680, the primary electron donor of PSII as well as several subsequent electron acceptors. D2 is needed for assembly of a stable PSII complex. This is Photosystem II D2 protein from Thermostichus vulcanus (Synechococcus vulcanus).